Here is a 329-residue protein sequence, read N- to C-terminus: Haptoglobin (329 aa).

Asparagine 9 is a glycosylation site (N-linked (GlcNAc...) asparagine). The Sushi domain occupies 13–70 (VSLPKPPVIENGYVEHMIRYQCKPFYKLHTEGDGVYTLNSEKHWTNKAVGEKLPECEA). 2 disulfides stabilise this stretch: cysteine 34/cysteine 68 and cysteine 72/cysteine 189. A propeptide is located at residue arginine 84. The region spanning 85-327 (IMGGSVDAKG…VLAWVQETIA (243 aa)) is the Peptidase S1 domain. Residues asparagine 107 and asparagine 214 are each glycosylated (N-linked (GlcNAc...) asparagine). Disulfide bonds link cysteine 232–cysteine 263 and cysteine 274–cysteine 304. Positions 241–246 (VPEKKS) are interaction with CD163.

Belongs to the peptidase S1 family. Tetramer of two alpha and two beta chains; disulfide-linked. The hemoglobin/haptoglobin complex is composed of a haptoglobin dimer bound to two hemoglobin alpha-beta dimers. Interacts with CD163. Interacts with ERGIC3. Expressed by the liver and secreted in plasma.

The protein localises to the secreted. It is found in the extracellular space. Functionally, as a result of hemolysis, hemoglobin is found to accumulate in the kidney and is secreted in the urine. Haptoglobin captures, and combines with free plasma hemoglobin to allow hepatic recycling of heme iron and to prevent kidney damage. Haptoglobin also acts as an antioxidant, has antibacterial activity and plays a role in modulating many aspects of the acute phase response. Hemoglobin/haptoglobin complexes are rapidly cleared by the macrophage CD163 scavenger receptor expressed on the surface of liver Kupfer cells through an endocytic lysosomal degradation pathway. The sequence is that of Haptoglobin (HP) from Canis lupus familiaris (Dog).